A 122-amino-acid chain; its full sequence is Large ribosomal subunit protein uL14 (122 aa).

It belongs to the universal ribosomal protein uL14 family. Part of the 50S ribosomal subunit. Forms a cluster with proteins L3 and L19. In the 70S ribosome, L14 and L19 interact and together make contacts with the 16S rRNA in bridges B5 and B8.

Functionally, binds to 23S rRNA. Forms part of two intersubunit bridges in the 70S ribosome. This Clostridium botulinum (strain Alaska E43 / Type E3) protein is Large ribosomal subunit protein uL14.